The sequence spans 762 residues: 5-methyltetrahydropteroyltriglutamate--homocysteine methyltransferase (762 aa).

5-methyltetrahydropteroyltri-L-glutamate contacts are provided by residues 17–20 (REWK) and K111. Residues 435–437 (IGS) and E488 contribute to the L-homocysteine site. Residues 435 to 437 (IGS) and E488 contribute to the L-methionine site. Residues 519–520 (RC) and W565 contribute to the 5-methyltetrahydropteroyltri-L-glutamate site. L-homocysteine is bound at residue D603. D603 contributes to the L-methionine binding site. E609 contributes to the 5-methyltetrahydropteroyltri-L-glutamate binding site. Residues H645, C647, and E669 each coordinate Zn(2+). The active-site Proton donor is H698. C730 contributes to the Zn(2+) binding site.

Belongs to the vitamin-B12 independent methionine synthase family. Zn(2+) serves as cofactor.

The enzyme catalyses 5-methyltetrahydropteroyltri-L-glutamate + L-homocysteine = tetrahydropteroyltri-L-glutamate + L-methionine. The protein operates within amino-acid biosynthesis; L-methionine biosynthesis via de novo pathway; L-methionine from L-homocysteine (MetE route): step 1/1. Functionally, catalyzes the transfer of a methyl group from 5-methyltetrahydrofolate to homocysteine resulting in methionine formation. The chain is 5-methyltetrahydropteroyltriglutamate--homocysteine methyltransferase from Bacillus cereus (strain ATCC 14579 / DSM 31 / CCUG 7414 / JCM 2152 / NBRC 15305 / NCIMB 9373 / NCTC 2599 / NRRL B-3711).